Consider the following 343-residue polypeptide: N-acetyl-gamma-glutamyl-phosphate reductase (343 aa).

Cys-147 is an active-site residue.

Belongs to the NAGSA dehydrogenase family. Type 1 subfamily.

The protein resides in the cytoplasm. The catalysed reaction is N-acetyl-L-glutamate 5-semialdehyde + phosphate + NADP(+) = N-acetyl-L-glutamyl 5-phosphate + NADPH + H(+). The protein operates within amino-acid biosynthesis; L-arginine biosynthesis; N(2)-acetyl-L-ornithine from L-glutamate: step 3/4. Functionally, catalyzes the NADPH-dependent reduction of N-acetyl-5-glutamyl phosphate to yield N-acetyl-L-glutamate 5-semialdehyde. The protein is N-acetyl-gamma-glutamyl-phosphate reductase of Listeria innocua serovar 6a (strain ATCC BAA-680 / CLIP 11262).